The following is a 449-amino-acid chain: Tubulin beta chain (449 aa).

Residues Q11, E69, S138, G142, T143, G144, N204, and N226 each coordinate GTP. E69 lines the Mg(2+) pocket.

This sequence belongs to the tubulin family. As to quaternary structure, dimer of alpha and beta chains. A typical microtubule is a hollow water-filled tube with an outer diameter of 25 nm and an inner diameter of 15 nM. Alpha-beta heterodimers associate head-to-tail to form protofilaments running lengthwise along the microtubule wall with the beta-tubulin subunit facing the microtubule plus end conferring a structural polarity. Microtubules usually have 13 protofilaments but different protofilament numbers can be found in some organisms and specialized cells. It depends on Mg(2+) as a cofactor.

It localises to the cytoplasm. It is found in the cytoskeleton. Functionally, tubulin is the major constituent of microtubules, a cylinder consisting of laterally associated linear protofilaments composed of alpha- and beta-tubulin heterodimers. Microtubules grow by the addition of GTP-tubulin dimers to the microtubule end, where a stabilizing cap forms. Below the cap, tubulin dimers are in GDP-bound state, owing to GTPase activity of alpha-tubulin. The protein is Tubulin beta chain (TUB2) of Candida albicans (Yeast).